The sequence spans 162 residues: CASP-like protein 1C2 (162 aa).

Residues 1 to 6 are Cytoplasmic-facing; sequence MMKPKR. Residues 7–27 form a helical membrane-spanning segment; that stretch reads LLSLLLRLIAVGATLAAVIIM. Over 28–49 the chain is Extracellular; the sequence is ATSHEKGTFFAVSYEAKYTDTP. The chain crosses the membrane as a helical span at residues 50-70; that stretch reads AFKYFVIANAIVTVYGFLVLF. Residues 71 to 79 are Cytoplasmic-facing; it reads HPPGSPLWR. Residues 80–100 form a helical membrane-spanning segment; the sequence is LVLALDLVFTMLLISSISAAL. The Extracellular segment spans residues 101 to 130; sequence AVAQVGKNGNSRAGWLPVCGQVTKYCNQVT. The chain crosses the membrane as a helical span at residues 131-151; the sequence is GALVAGLIALITYIILLLHSI. Residues 152–162 lie on the Cytoplasmic side of the membrane; sequence YTFLNPLLEKA.

It belongs to the Casparian strip membrane proteins (CASP) family. As to quaternary structure, homodimer and heterodimers.

The protein localises to the cell membrane. The protein is CASP-like protein 1C2 of Populus trichocarpa (Western balsam poplar).